The following is a 466-amino-acid chain: MTDETLKNQMWGGRFIAGPAAVMEEINASIDVDQKLYRQDIEGSLSHAAMLAQTKIILQSDYEKISHGLKIILQEIEEGDFVFSRNLEDIHMNIEARLSALIGPVAGRLHTARSRNDQVAVDFRLWVRETLQKIAQALKQLIKQLLILAEQHVKTYMPGFTHLQLAQPVTLGHYMMAYVEMFGRDLSRMRDASERMNESPLGAAALAGTSFPIDRFMTAQALGFREPTRNSIDSVSDRDFALEFLSAGALCAMHLSRLAEEIILWSSEQFRFIYLSDAFSTGSSIMPQKRNPDAAELVRAKTGRLNGALMGLLTVMKGLPLAYSKDMQEDKEYVFDGALSLELSLAAMTGMIADLEVNKKAMKQAADLGYATATDFADWLVRELGIPFREAHHMTGQAMALAEKKQCRLQDLSLDELQAICPDINATLFDVLTVEKSVESRKSFGGTASSEVLRQIAYWKKRLVSA.

The protein belongs to the lyase 1 family. Argininosuccinate lyase subfamily.

Its subcellular location is the cytoplasm. It carries out the reaction 2-(N(omega)-L-arginino)succinate = fumarate + L-arginine. The protein operates within amino-acid biosynthesis; L-arginine biosynthesis; L-arginine from L-ornithine and carbamoyl phosphate: step 3/3. In Bartonella tribocorum (strain CIP 105476 / IBS 506), this protein is Argininosuccinate lyase.